The following is a 159-amino-acid chain: Small ribosomal subunit protein uS7c (159 aa).

The tract at residues 137–159 is disordered; that stretch reads HAIRKKEETHKMAESNRAXAHYR. Positions 141–150 are enriched in basic and acidic residues; the sequence is KKEETHKMAE.

It belongs to the universal ribosomal protein uS7 family. In terms of assembly, part of the 30S ribosomal subunit.

Its subcellular location is the plastid. It localises to the chloroplast. In terms of biological role, one of the primary rRNA binding proteins, it binds directly to 16S rRNA where it nucleates assembly of the head domain of the 30S subunit. This chain is Small ribosomal subunit protein uS7c (rps7), found in Sciadopitys verticillata (Japanese umbrella-pine).